Here is a 195-residue protein sequence, read N- to C-terminus: MKISHFFACLDRLRLIQRWSLMRNIEKENLAEHSLQVAFVAHALAVIKNKFYQGHLNPDRIAVMAMYHDTSEIFTGDLPTPIKYFNPKITQAYKEIENAAEAHLLALLPKELQADFAPYLDSTQFSAQEKHVVKQADLICAYVKAQFELENGNQEFKAAKARLETLMKTWHSDEMRYFIEVFIPSFGKPIDEITL.

Substrate contacts are provided by residues 18-19 and histidine 33; that span reads RW. Positions 30–142 constitute an HD domain; that stretch reads LAEHSLQVAF…VKQADLICAY (113 aa). The a divalent metal cation site is built by histidine 33, histidine 68, and aspartate 69. Residues aspartate 69, 77-80, and aspartate 137 each bind substrate; that span reads DLPT. Residue aspartate 137 coordinates a divalent metal cation.

Belongs to the 5DNU family. In terms of assembly, homodimer. A divalent metal cation is required as a cofactor.

The protein localises to the cytoplasm. The catalysed reaction is a 2'-deoxyribonucleoside 5'-phosphate + H2O = a 2'-deoxyribonucleoside + phosphate. Functionally, catalyzes the strictly specific dephosphorylation of 2'-deoxyribonucleoside 5'-monophosphates. In Pasteurella multocida (strain Pm70), this protein is 5'-deoxynucleotidase PM0747.